A 297-amino-acid polypeptide reads, in one-letter code: uncharacterized protein (297 aa).

The disordered stretch occupies residues 1–44 (MQKSKSIFIPKAFAPQQQAQAPPSKLDNKDPSVEGEGASKPKDD). Low complexity predominate over residues 10 to 23 (PKAFAPQQQAQAPP). Residues 26–44 (LDNKDPSVEGEGASKPKDD) are compositionally biased toward basic and acidic residues.

This is an uncharacterized protein from Invertebrate iridescent virus 3 (IIV-3).